A 206-amino-acid polypeptide reads, in one-letter code: Thiamine-phosphate synthase (206 aa).

4-amino-2-methyl-5-(diphosphooxymethyl)pyrimidine contacts are provided by residues 36–40 and Asn68; that span reads QLRAK. 2 residues coordinate Mg(2+): Asp69 and Asp88. Residue Ser105 coordinates 4-amino-2-methyl-5-(diphosphooxymethyl)pyrimidine. 2-[(2R,5Z)-2-carboxy-4-methylthiazol-5(2H)-ylidene]ethyl phosphate is bound at residue 131–133; that stretch reads TPT. Residue Lys134 participates in 4-amino-2-methyl-5-(diphosphooxymethyl)pyrimidine binding. 2-[(2R,5Z)-2-carboxy-4-methylthiazol-5(2H)-ylidene]ethyl phosphate is bound at residue Gly162.

The protein belongs to the thiamine-phosphate synthase family. Mg(2+) serves as cofactor.

It catalyses the reaction 2-[(2R,5Z)-2-carboxy-4-methylthiazol-5(2H)-ylidene]ethyl phosphate + 4-amino-2-methyl-5-(diphosphooxymethyl)pyrimidine + 2 H(+) = thiamine phosphate + CO2 + diphosphate. The enzyme catalyses 2-(2-carboxy-4-methylthiazol-5-yl)ethyl phosphate + 4-amino-2-methyl-5-(diphosphooxymethyl)pyrimidine + 2 H(+) = thiamine phosphate + CO2 + diphosphate. It carries out the reaction 4-methyl-5-(2-phosphooxyethyl)-thiazole + 4-amino-2-methyl-5-(diphosphooxymethyl)pyrimidine + H(+) = thiamine phosphate + diphosphate. It participates in cofactor biosynthesis; thiamine diphosphate biosynthesis; thiamine phosphate from 4-amino-2-methyl-5-diphosphomethylpyrimidine and 4-methyl-5-(2-phosphoethyl)-thiazole: step 1/1. Functionally, condenses 4-methyl-5-(beta-hydroxyethyl)thiazole monophosphate (THZ-P) and 2-methyl-4-amino-5-hydroxymethyl pyrimidine pyrophosphate (HMP-PP) to form thiamine monophosphate (TMP). In Thermus thermophilus (strain ATCC BAA-163 / DSM 7039 / HB27), this protein is Thiamine-phosphate synthase.